The chain runs to 44 residues: Photosystem I reaction center subunit IX (44 aa).

A helical transmembrane segment spans residues 9–29 (FIRSAPVVAAVWLSLTAGIII).

This sequence belongs to the PsaJ family.

It localises to the cellular thylakoid membrane. Functionally, may help in the organization of the PsaE and PsaF subunits. This is Photosystem I reaction center subunit IX from Prochlorococcus marinus subsp. pastoris (strain CCMP1986 / NIES-2087 / MED4).